The sequence spans 350 residues: Ookinete surface protein PIMMS43 (350 aa).

The signal sequence occupies residues 1 to 24 (MIKLCTFLSLFLIFFFLNLNAING). Residues 330-350 (NSIASKLMSVFVFIAVIIYIL) traverse the membrane as a helical segment.

Forms multimers, perhaps with an unknown protein(s).

Its subcellular location is the membrane. Functionally, involved in ookinete evasion of the mosquito complement-like response, oocyst maturation, sporozoite development and infectivity. The protein is Ookinete surface protein PIMMS43 of Plasmodium berghei (strain Anka).